The chain runs to 339 residues: Phenylalanine--tRNA ligase alpha subunit (339 aa).

Position 254 (glutamate 254) interacts with Mg(2+).

The protein belongs to the class-II aminoacyl-tRNA synthetase family. Phe-tRNA synthetase alpha subunit type 1 subfamily. As to quaternary structure, tetramer of two alpha and two beta subunits. Mg(2+) serves as cofactor.

Its subcellular location is the cytoplasm. It carries out the reaction tRNA(Phe) + L-phenylalanine + ATP = L-phenylalanyl-tRNA(Phe) + AMP + diphosphate + H(+). The sequence is that of Phenylalanine--tRNA ligase alpha subunit from Lachnoclostridium phytofermentans (strain ATCC 700394 / DSM 18823 / ISDg) (Clostridium phytofermentans).